A 595-amino-acid polypeptide reads, in one-letter code: Protein alan shepard (595 aa).

Over residues 1 to 12 the composition is skewed to pro residues; sequence MHPRYSPAPPPH. The disordered stretch occupies residues 1–82; it reads MHPRYSPAPP…ASVAAAPPTP (82 aa). The residue at position 5 (Y5) is a Phosphotyrosine. Residues 13–31 show a composition bias toward low complexity; that stretch reads QQQQQQQQQPMGGPHQQQS. Over residues 32-43 the composition is skewed to gly residues; that stretch reads AGGGPGHGGGAS. The segment covering 50 to 68 has biased composition (polar residues); sequence PNSQQLPPQMPRSQNYANG. Low complexity predominate over residues 69–78; that stretch reads SSSAASVAAA. Phosphotyrosine occurs at positions 138 and 154. A disordered region spans residues 184 to 238; sequence RVPTAASPSNTNSSSSSNTGSQSGTLSTSLSNTTNTNTTMGPNGTAQNQNQQGGE. Positions 190–238 are enriched in low complexity; the sequence is SPSNTNSSSSSNTGSQSGTLSTSLSNTTNTNTTMGPNGTAQNQNQQGGE. RRM domains are found at residues 243–316 and 322–401; these read TNLY…MAKQ and TNLY…FADG. A disordered region spans residues 569 to 595; it reads MTDSEQASTAASPDEAYTQYPHQAAPK.

Has a role in the perception of gravity. In Drosophila virilis (Fruit fly), this protein is Protein alan shepard.